Here is a 372-residue protein sequence, read N- to C-terminus: Cytochrome b (372 aa).

Helical transmembrane passes span 25–45 (FGSMLLTCLALQTMTGFFLAI), 69–90 (WMMQNLHAIGASMFFICIYIHI), 105–125 (WLSGTTLLIILMATAFFGYVL), and 170–190 (FFALHFILPFTIISMSSIHIM). The heme b site is built by histidine 75 and histidine 89. Heme b contacts are provided by histidine 174 and histidine 188. Histidine 193 provides a ligand contact to a ubiquinone. 4 helical membrane-spanning segments follow: residues 218–238 (HKDMLMLTIMMTALFIIMSFM), 280–300 (LGGTVALVLSVTILMTMPFTH), 312–332 (LMQFMFWTLVATFITITWAAT), and 339–358 (FTTIGQATAILYFTFFIMNP).

This sequence belongs to the cytochrome b family. The cytochrome bc1 complex contains 3 respiratory subunits (MT-CYB, CYC1 and UQCRFS1), 2 core proteins (UQCRC1 and UQCRC2) and probably 6 low-molecular weight proteins. Requires heme b as cofactor.

The protein localises to the mitochondrion inner membrane. Component of the ubiquinol-cytochrome c reductase complex (complex III or cytochrome b-c1 complex) that is part of the mitochondrial respiratory chain. The b-c1 complex mediates electron transfer from ubiquinol to cytochrome c. Contributes to the generation of a proton gradient across the mitochondrial membrane that is then used for ATP synthesis. The protein is Cytochrome b (MT-CYB) of Pantherophis obsoletus (Black ratsnake).